We begin with the raw amino-acid sequence, 54 residues long: Apelin receptor early endogenous ligand (54 aa).

Positions 1-25 are cleaved as a signal peptide; sequence MRFQPLFWVFFIFAMSLLFITEEKS.

The protein belongs to the Elabela/Toddler family. Interacts with APLNR.

The protein localises to the secreted. It localises to the extracellular space. Its function is as follows. Peptide hormone that functions as endogenous ligand for the G-protein-coupled apelin receptor (APLNR/APJ), that plays a role in the regulation of normal cardiovascular function and fluid homeostasis. Functions as a balanced agonist activating both G(i) protein pathway and beta-arrestin pathway of APLNR. Downstream G proteins activation, apelin can inhibit cAMP production and activate key intracellular effectors such as ERKs. On the other hand, APLNR activation induces beta-arrestin recruitment to the membrane leading to desensitization and internalization of the receptor. Required for mesendodermal differentiation, blood vessels formation and heart morphogenesis during early development and for adult cardiovascular homeostasis. Acts as a motogen by promoting mesendodermal cell migration during gastrulation by binding and activating APLNR. Acts as an early embryonic regulator of cellular movement with a role in migration and development of cardiac progenitor cells. May act as a chemoattractant for the activation of angioblast migration toward the embryonic midline, i.e. the position of the future vessel formation, during vasculogenesis. Positively regulates sinus venosus (SV)-derived endothelial cells migration into the developing heart to promote coronary blood vessel sprouting. Plays a role in placental vascular development; promotes placental trophoblast invasion and spiral artery remodeling in the uterus. Involved in the regulation of maternal cardiovascular homeostasis to prevent gestational hypertension and for potent cardioprotective functions during heart failure. Mediates myocardial contractility in an ERK1/2-dependent manner. The chain is Apelin receptor early endogenous ligand from Rattus norvegicus (Rat).